Here is a 216-residue protein sequence, read N- to C-terminus: GTP cyclohydrolase 1 (216 aa).

The Zn(2+) site is built by C108, H111, and C179.

Belongs to the GTP cyclohydrolase I family. As to quaternary structure, toroid-shaped homodecamer, composed of two pentamers of five dimers.

The catalysed reaction is GTP + H2O = 7,8-dihydroneopterin 3'-triphosphate + formate + H(+). It participates in cofactor biosynthesis; 7,8-dihydroneopterin triphosphate biosynthesis; 7,8-dihydroneopterin triphosphate from GTP: step 1/1. This is GTP cyclohydrolase 1 from Shewanella sp. (strain MR-7).